We begin with the raw amino-acid sequence, 270 residues long: tRNA pseudouridine synthase A (270 aa).

Catalysis depends on Asp60, which acts as the Nucleophile. Residue Tyr118 coordinates substrate.

Belongs to the tRNA pseudouridine synthase TruA family. Homodimer.

It carries out the reaction uridine(38/39/40) in tRNA = pseudouridine(38/39/40) in tRNA. Functionally, formation of pseudouridine at positions 38, 39 and 40 in the anticodon stem and loop of transfer RNAs. In Salmonella agona (strain SL483), this protein is tRNA pseudouridine synthase A.